Reading from the N-terminus, the 511-residue chain is Synaptotagmin-6 (511 aa).

The Vesicular portion of the chain corresponds to M1 to S59. A cysteine motif region spans residues C12–Q38. A helical transmembrane segment spans residues L60 to F80. At W81–L511 the chain is on the cytoplasmic side. Positions A93 to S103 are enriched in low complexity. Disordered stretches follow at residues A93 to K118 and T157 to Q182. The segment covering Q160–H172 has biased composition (polar residues). S217 bears the Phosphoserine mark. 2 consecutive C2 domains span residues S230 to K351 and D362 to H495. Residues D261, D267, D319, F320, D321, S324, D327, D393, D399, D453, and D455 each contribute to the Ca(2+) site. Residues M483–L511 form a necessary for cell membrane association (isoform 2) region.

It belongs to the synaptotagmin family. In terms of assembly, isoform 1: Homodimer; disulfide-linked via the cysteine motif. Isoform 1: Can also form heterodimers with SYT3, SYT7, SYT9 and SYT10. Isoform 1: Interacts with STX1A, STX1B and STX2; the interaction is Ca(2+)-dependent. Isoform 2: Is not able to form homodimer and heterodimers. The cofactor is Ca(2+).

Its subcellular location is the cytoplasmic vesicle. The protein resides in the secretory vesicle. It is found in the synaptic vesicle membrane. It localises to the membrane. The protein localises to the cytoplasm. Its subcellular location is the cytosol. The protein resides in the cell membrane. Functionally, may be involved in Ca(2+)-dependent exocytosis of secretory vesicles through Ca(2+) and phospholipid binding to the C2 domain or may serve as Ca(2+) sensors in the process of vesicular trafficking and exocytosis. May mediate Ca(2+)-regulation of exocytosis in acrosomal reaction in sperm. This Rattus norvegicus (Rat) protein is Synaptotagmin-6 (Syt6).